The chain runs to 202 residues: Imidazoleglycerol-phosphate dehydratase (202 aa).

The protein belongs to the imidazoleglycerol-phosphate dehydratase family.

Its subcellular location is the cytoplasm. It catalyses the reaction D-erythro-1-(imidazol-4-yl)glycerol 3-phosphate = 3-(imidazol-4-yl)-2-oxopropyl phosphate + H2O. The protein operates within amino-acid biosynthesis; L-histidine biosynthesis; L-histidine from 5-phospho-alpha-D-ribose 1-diphosphate: step 6/9. This Synechococcus sp. (strain WH7803) protein is Imidazoleglycerol-phosphate dehydratase.